A 323-amino-acid polypeptide reads, in one-letter code: Peroxisome biogenesis protein 20 (323 aa).

Cysteine 8 participates in a covalent cross-link: Glycyl cysteine thioester (Cys-Gly) (interchain with G-Cter in ubiquitin). A Glycyl lysine isopeptide (Lys-Gly) (interchain with G-Cter in ubiquitin) cross-link involves residue lysine 19. Short sequence motifs (wxxxF/Y motif) lie at residues 89–93 (WSSEF), 102–105 (WVED), and 141–145 (WTQEF).

This sequence belongs to the peroxisomal targeting signal receptor family. Interacts (via WxxxF/Y and LVxEF motifs) with PEX14; promoting translocation through the PEX13-PEX14 docking complex. Interacts with PEX7. Monoubiquitinated at Cys-8 by PEX2 during PEX20 passage through the PEX2-PEX10-PEX12 retrotranslocation channel: monoubiquitination acts as a signal for PEX20 extraction and is required for proper export from peroxisomes and recycling. When PEX5 recycling is compromised, polyubiquitinated at Lys-19 by PEX10 during its passage through the retrotranslocation channel, leading to its degradation.

Its subcellular location is the cytoplasm. The protein localises to the cytosol. It localises to the peroxisome matrix. Its function is as follows. Coreceptor required for the peroxisomal import of proteins containing a C-terminal PTS2-type peroxisomal targeting signal, such as 3-oxoacyl-CoA thiolase. Acts via its interaction with PEX7, promoting association between PEX7 bound to cargo proteins and the PEX13-PEX14 docking complex. PEX20 along with PEX7 and PTS2-containing cargo proteins are tranlocated into peroxisomes by passing through the PEX13-PEX14 docking complex. PEX20 coreceptor is then retrotranslocated into the cytosol, leading to release of bound cargo in the peroxisome matrix, and reset for a subsequent peroxisome import cycle. Also mediates peroxisomal import of proteins that do not contain PTS1- or PTS2-type peroxisomal targeting signals, such as acyl-CoA oxidases (Aox) izozymes. Import of acyl-CoA oxidases (Aox) izozymes is independent of PEX7. Required for PEX7 ubiquitination. The sequence is that of Peroxisome biogenesis protein 20 from Komagataella pastoris (Yeast).